The sequence spans 269 residues: Probable aquaporin TIP5-1 (269 aa).

A run of 5 helical transmembrane segments spans residues 19–39 (AYFA…GSTI), 54–74 (SLMA…FIAA), 84–104 (AVTF…IFYW), 139–159 (FGAG…VHVA), and 177–197 (ALGA…AGSL). The NPA 1 motif lies at 82 to 84 (NPA). Residues 203 to 205 (NPA) carry the NPA 2 motif. Residues 223 to 243 (YWAGPMVGAAVAALVHQALVF) traverse the membrane as a helical segment.

Belongs to the MIP/aquaporin (TC 1.A.8) family. TIP (TC 1.A.8.10) subfamily. Expressed in leaves and anthers, and at lower levels in roots.

Its subcellular location is the vacuole membrane. Aquaporins facilitate the transport of water and small neutral solutes across cell membranes. May be involved in transport from the vacuolar compartment to the cytoplasm. In Oryza sativa subsp. japonica (Rice), this protein is Probable aquaporin TIP5-1 (TIP5;1).